The following is a 190-amino-acid chain: Elongation factor P 2 (190 aa).

This sequence belongs to the elongation factor P family.

It localises to the cytoplasm. Its pathway is protein biosynthesis; polypeptide chain elongation. Functionally, involved in peptide bond synthesis. Stimulates efficient translation and peptide-bond synthesis on native or reconstituted 70S ribosomes in vitro. Probably functions indirectly by altering the affinity of the ribosome for aminoacyl-tRNA, thus increasing their reactivity as acceptors for peptidyl transferase. The sequence is that of Elongation factor P 2 (efp2) from Chlamydia trachomatis serovar D (strain ATCC VR-885 / DSM 19411 / UW-3/Cx).